Here is a 118-residue protein sequence, read N- to C-terminus: Large ribosomal subunit protein bL20 (118 aa).

Belongs to the bacterial ribosomal protein bL20 family.

Functionally, binds directly to 23S ribosomal RNA and is necessary for the in vitro assembly process of the 50S ribosomal subunit. It is not involved in the protein synthesizing functions of that subunit. This is Large ribosomal subunit protein bL20 from Thermus thermophilus (strain ATCC BAA-163 / DSM 7039 / HB27).